Reading from the N-terminus, the 486-residue chain is Cardiolipin synthase A (486 aa).

A run of 2 helical transmembrane segments spans residues 3-23 and 38-58; these read TFYTVISWLAIFGYWLLIASV and MAWLLIIYILPLVGIIAYLSF. 2 consecutive PLD phosphodiesterase domains span residues 219–246 and 399–426; these read MDLRQHRKVVLIDNFIAYTGSMNLVDPR and EGGLLHTKSVLVDGQLSLVGTVNLDMRS. Catalysis depends on residues His224, Lys226, Asp231, His404, Lys406, and Asp411.

It belongs to the phospholipase D family. Cardiolipin synthase subfamily. ClsA sub-subfamily.

It localises to the cell inner membrane. It catalyses the reaction 2 a 1,2-diacyl-sn-glycero-3-phospho-(1'-sn-glycerol) = a cardiolipin + glycerol. Catalyzes the reversible phosphatidyl group transfer from one phosphatidylglycerol molecule to another to form cardiolipin (CL) (diphosphatidylglycerol) and glycerol. The chain is Cardiolipin synthase A from Edwardsiella ictaluri (strain 93-146).